Here is a 185-residue protein sequence, read N- to C-terminus: Adenine phosphoribosyltransferase (185 aa).

It belongs to the purine/pyrimidine phosphoribosyltransferase family. In terms of assembly, homodimer.

It is found in the cytoplasm. It catalyses the reaction AMP + diphosphate = 5-phospho-alpha-D-ribose 1-diphosphate + adenine. It participates in purine metabolism; AMP biosynthesis via salvage pathway; AMP from adenine: step 1/1. In terms of biological role, catalyzes a salvage reaction resulting in the formation of AMP, that is energically less costly than de novo synthesis. This Aliarcobacter butzleri (strain RM4018) (Arcobacter butzleri) protein is Adenine phosphoribosyltransferase.